Here is a 404-residue protein sequence, read N- to C-terminus: Cysteine desulfurase IscS (404 aa).

Pyridoxal 5'-phosphate contacts are provided by residues 75–76, Asn-155, Gln-183, and 203–205; these read AT and SGH. An N6-(pyridoxal phosphate)lysine modification is found at Lys-206. Thr-243 lines the pyridoxal 5'-phosphate pocket. Cys-328 functions as the Cysteine persulfide intermediate in the catalytic mechanism. Cys-328 provides a ligand contact to [2Fe-2S] cluster.

Belongs to the class-V pyridoxal-phosphate-dependent aminotransferase family. NifS/IscS subfamily. Homodimer. Forms a heterotetramer with IscU, interacts with other sulfur acceptors. The cofactor is pyridoxal 5'-phosphate.

It localises to the cytoplasm. It catalyses the reaction (sulfur carrier)-H + L-cysteine = (sulfur carrier)-SH + L-alanine. The protein operates within cofactor biosynthesis; iron-sulfur cluster biosynthesis. In terms of biological role, master enzyme that delivers sulfur to a number of partners involved in Fe-S cluster assembly, tRNA modification or cofactor biosynthesis. Catalyzes the removal of elemental sulfur and selenium atoms from cysteine and selenocysteine to produce alanine. Functions as a sulfur delivery protein for Fe-S cluster synthesis onto IscU, an Fe-S scaffold assembly protein, as well as other S acceptor proteins. Also functions as a selenium delivery protein in the pathway for the biosynthesis of selenophosphate. In Salmonella paratyphi C (strain RKS4594), this protein is Cysteine desulfurase IscS.